The sequence spans 336 residues: Vacuolar protein sorting-associated protein 26B (336 aa).

Phosphoserine occurs at positions 302, 304, and 319.

It belongs to the VPS26 family. Component of the heterotrimeric retromer cargo-selective complex (CSC), also described as vacuolar protein sorting subcomplex (VPS), formed by VPS26 (VPS26A or VPS26B), VPS29 and VPS35. The CSC has a highly elongated structure with VPS26 and VPS29 binding independently at opposite distal ends of VPS35 as central platform. The CSC is believed to associate with variable sorting nexins to form functionally distinct retromer complex variants. The originally described SNX-BAR retromer is a pentamer containing the CSC and a heterodimeric membrane-deforming subcomplex formed between SNX1 or SNX2 and SNX5 or SNX6 (also called SNX-BAR subcomplex); the respective CSC and SNX-BAR subcomplexes associate with low affinity. The CSC associates with SNX3 to form a SNX3-retromer complex. The CSC associates with SNX27, the WASH complex and the SNX-BAR subcomplex to form the SNX27-retromer complex. Interacts with VPS29, VPS35, TBC1D5, GOLPH3, SNX27. In terms of tissue distribution, ubiquitously expressed in developing embryo and adult. Highly expressed in brain.

The protein resides in the cytoplasm. Its subcellular location is the membrane. It is found in the early endosome. It localises to the late endosome. Functionally, acts as a component of the retromer cargo-selective complex (CSC). The CSC is believed to be the core functional component of retromer or respective retromer complex variants acting to prevent missorting of selected transmembrane cargo proteins into the lysosomal degradation pathway. The recruitment of the CSC to the endosomal membrane involves RAB7A and SNX3. The SNX-BAR retromer mediates retrograde transport of cargo proteins from endosomes to the trans-Golgi network (TGN) and is involved in endosome-to-plasma membrane transport for cargo protein recycling. The SNX3-retromer mediates the retrograde transport of WLS distinct from the SNX-BAR retromer pathway. The SNX27-retromer is believed to be involved in endosome-to-plasma membrane trafficking and recycling of a broad spectrum of cargo proteins. The CSC seems to act as recruitment hub for other proteins, such as the WASH complex and TBC1D5. May be involved in retrograde transport of SORT1 but not of IGF2R. Acts redundantly with VSP26A in SNX-27 mediated endocytic recycling of SLC2A1/GLUT1. This chain is Vacuolar protein sorting-associated protein 26B (Vps26b), found in Mus musculus (Mouse).